Reading from the N-terminus, the 1040-residue chain is Multidrug resistance protein MdtB (1040 aa).

12 helical membrane passes run 16–36 (FIMRPVATTLLMVAILLAGII), 347–367 (LMMAITLVVMIIYLFLRNIPA), 369–389 (IIPGVAVPLSLIGTFAVMVFL), 396–416 (LTLMALTIATGFVVDDAIVVI), 440–460 (IGFTIISLTFSLIAVLIPLLF), 472–492 (FAITLAVAILISAVVSLTLTP), 537–557 (WLTLSVALSTLLLSVLLWVFI), 863–883 (LGSTVWLIVAAVVAMYIVLGI), 888–908 (FIHPITILSTLPTAGVGALLA), 911–931 (IAGSELDVIAIIGIILLIGIV), 968–988 (ILMTTLAALLGALPLMLSTGV), and 998–1018 (IGMVGGLIVSQVLTLFTTPVI).

Belongs to the resistance-nodulation-cell division (RND) (TC 2.A.6) family. MdtB subfamily. In terms of assembly, part of a tripartite efflux system composed of MdtA, MdtB and MdtC. MdtB forms a heteromultimer with MdtC.

The protein localises to the cell inner membrane. Its function is as follows. The MdtABC tripartite complex confers resistance against novobiocin and deoxycholate. The sequence is that of Multidrug resistance protein MdtB from Escherichia coli O157:H7 (strain EC4115 / EHEC).